We begin with the raw amino-acid sequence, 222 residues long: MLKSRIKYNTASFVTSAPDITKLPADTGIEVAFAGRSNAGKSSALNALTDQKLARTSKTPGRTQLINTFELADVDDMRLIDLPGYGFAKVPIEMKKKWQKSLGEYLQKRQSLKGIVILMDIRHPLKDLDRDLINWAISSEIPVLALLTKADKFKQGPRQSQVLKVRRELSALDGDITVHAFSSLKGTGLPDVAKKLDEWFLGPVVAVPPAEKILNDDTNPTS.

Residues 27 to 202 (TGIEVAFAGR…AKKLDEWFLG (176 aa)) form the EngB-type G domain. Residues 35-42 (GRSNAGKS), 61-65 (GRTQL), 81-84 (DLPG), 148-151 (TKAD), and 181-183 (FSS) contribute to the GTP site. Positions 42 and 63 each coordinate Mg(2+).

Belongs to the TRAFAC class TrmE-Era-EngA-EngB-Septin-like GTPase superfamily. EngB GTPase family. Requires Mg(2+) as cofactor.

In terms of biological role, necessary for normal cell division and for the maintenance of normal septation. This is Probable GTP-binding protein EngB from Pseudoalteromonas translucida (strain TAC 125).